A 668-amino-acid chain; its full sequence is UvrABC system protein B (668 aa).

The Helicase ATP-binding domain occupies 36–276; it reads DNIKGGEKAQ…EEAIKNIMEE (241 aa). 49 to 56 is a binding site for ATP; the sequence is GATGTGKT. The Beta-hairpin motif lies at 102–125; the sequence is YYDYYQPEAYVPSSDTYIEKDSSV. The Helicase C-terminal domain maps to 440-606; sequence QMDDLLGEIN…TIKKEIRDLI (167 aa). In terms of domain architecture, UVR spans 632 to 667; sequence QEAIKKLQKQMHEAAELLDFELAAQIRDMVLELKSM.

This sequence belongs to the UvrB family. As to quaternary structure, forms a heterotetramer with UvrA during the search for lesions. Interacts with UvrC in an incision complex.

The protein resides in the cytoplasm. The UvrABC repair system catalyzes the recognition and processing of DNA lesions. A damage recognition complex composed of 2 UvrA and 2 UvrB subunits scans DNA for abnormalities. Upon binding of the UvrA(2)B(2) complex to a putative damaged site, the DNA wraps around one UvrB monomer. DNA wrap is dependent on ATP binding by UvrB and probably causes local melting of the DNA helix, facilitating insertion of UvrB beta-hairpin between the DNA strands. Then UvrB probes one DNA strand for the presence of a lesion. If a lesion is found the UvrA subunits dissociate and the UvrB-DNA preincision complex is formed. This complex is subsequently bound by UvrC and the second UvrB is released. If no lesion is found, the DNA wraps around the other UvrB subunit that will check the other stand for damage. The protein is UvrABC system protein B of Streptococcus thermophilus (strain ATCC BAA-491 / LMD-9).